The sequence spans 156 residues: Small ribosomal subunit protein uS7 (156 aa).

Belongs to the universal ribosomal protein uS7 family. Part of the 30S ribosomal subunit. Contacts proteins S9 and S11.

One of the primary rRNA binding proteins, it binds directly to 16S rRNA where it nucleates assembly of the head domain of the 30S subunit. Is located at the subunit interface close to the decoding center, probably blocks exit of the E-site tRNA. This is Small ribosomal subunit protein uS7 from Lacticaseibacillus casei (strain BL23) (Lactobacillus casei).